The sequence spans 183 residues: Large ribosomal subunit protein uL6 (183 aa).

It belongs to the universal ribosomal protein uL6 family. Part of the 50S ribosomal subunit.

In terms of biological role, this protein binds to the 23S rRNA, and is important in its secondary structure. It is located near the subunit interface in the base of the L7/L12 stalk, and near the tRNA binding site of the peptidyltransferase center. This chain is Large ribosomal subunit protein uL6, found in Chlamydia felis (strain Fe/C-56) (Chlamydophila felis).